Reading from the N-terminus, the 609-residue chain is QWRF motif-containing protein 4 (609 aa).

Disordered stretches follow at residues 1–227 (MQVG…IRGN) and 271–369 (EVSS…TAQS). Composition is skewed to polar residues over residues 11–21 (GKQQQSVSDAT) and 46–57 (EVSSRYRSPTPT). 2 stretches are compositionally biased toward low complexity: residues 98-110 (PVSDVLVDLPVSS) and 129-143 (SLSVSFQSDSVSVPV). Polar residues predominate over residues 151–180 (VTSSTDRTLRPSSSNIAHKQQSETTSVTRK). Low complexity-rich tracts occupy residues 271–285 (EVSSSTTSEDSSSTE) and 302–332 (SAPGSRTASPSRSSFSSSSSSNSRGMSPSRG). The QWRF motif motif lies at 407 to 410 (QWRF). The disordered stretch occupies residues 588–609 (EEEVRDDAESSPLLPLSKFQWP).

It belongs to the QWRF family.

The protein is QWRF motif-containing protein 4 (QWRF4) of Arabidopsis thaliana (Mouse-ear cress).